A 371-amino-acid polypeptide reads, in one-letter code: Enterobactin C-glucosyltransferase (371 aa).

This sequence belongs to the glycosyltransferase 28 family.

Its subcellular location is the cytoplasm. The enzyme catalyses enterobactin + UDP-alpha-D-glucose = monoglucosyl-enterobactin + UDP. It carries out the reaction monoglucosyl-enterobactin + UDP-alpha-D-glucose = diglucosyl-enterobactin + UDP + H(+). It catalyses the reaction diglucosyl-enterobactin + UDP-alpha-D-glucose = triglucosyl-enterobactin + UDP + H(+). It functions in the pathway siderophore biosynthesis; enterobactin biosynthesis. Catalyzes the successive monoglucosylation, diglucosylation and triglucosylation of enterobactin (Ent). Transfers glucosyl groups from uridine-5'-diphosphoglucose (UDP-Glc) to C5 of one, two or three of the 2,3-dihydroxybenzoyl (DHB) units of Ent to yield monoglucosyl-C-Ent (MGE), diglucosyl-C-Ent (DGE) and triglucosyl-C-Ent (TGE). Glucosylation decreases the membrane affinity of Ent and increases the iron acquisition rate. This is Enterobactin C-glucosyltransferase from Escherichia coli O6:H1 (strain CFT073 / ATCC 700928 / UPEC).